The primary structure comprises 247 residues: Orotidine 5'-phosphate decarboxylase (247 aa).

Substrate contacts are provided by residues D22, K44, D71–T80, T131, R192, Q201, G221, and R222. K73 serves as the catalytic Proton donor.

This sequence belongs to the OMP decarboxylase family. Type 1 subfamily. As to quaternary structure, homodimer.

The catalysed reaction is orotidine 5'-phosphate + H(+) = UMP + CO2. The protein operates within pyrimidine metabolism; UMP biosynthesis via de novo pathway; UMP from orotate: step 2/2. In terms of biological role, catalyzes the decarboxylation of orotidine 5'-monophosphate (OMP) to uridine 5'-monophosphate (UMP). This is Orotidine 5'-phosphate decarboxylase from Pectobacterium atrosepticum (strain SCRI 1043 / ATCC BAA-672) (Erwinia carotovora subsp. atroseptica).